We begin with the raw amino-acid sequence, 674 residues long: Pesticidal crystal protein Cry24Aa (674 aa).

The protein belongs to the delta endotoxin family.

Its function is as follows. Promotes colloidosmotic lysis by binding to the midgut epithelial cells of insects. This chain is Pesticidal crystal protein Cry24Aa (cry24Aa), found in Bacillus thuringiensis subsp. jegathesan.